The sequence spans 257 residues: E3 ubiquitin-protein ligase RNF170 (257 aa).

Over 1–24 the chain is Lumenal; that stretch reads MADNQEGRPYFPLDEGSIIEGVSD. A helical transmembrane segment spans residues 25 to 45; the sequence is QVIVVVLLSFVAVGSLLYLLL. Over 46-200 the chain is Cytoplasmic; it reads RNDEQNIHPE…GGLFWMFRIR (155 aa). An RING-type zinc finger spans residues 87–130; the sequence is CPVCLQQATFPVETNCGHLFCGSCIIAYWRYGSWLGAINCPICR. The helical transmembrane segment at 201 to 221 threads the bilayer; the sequence is IVLCLLGALFYLVSPLDIIPE. Residue A222 is a topological domain, lumenal. The helical transmembrane segment at 223–243 threads the bilayer; it reads VFGLLGFLDDFFVLFLLLIYI. Residues 244 to 257 lie on the Cytoplasmic side of the membrane; that stretch reads SIMYREVVTQRLYR.

It localises to the endoplasmic reticulum membrane. The catalysed reaction is S-ubiquitinyl-[E2 ubiquitin-conjugating enzyme]-L-cysteine + [acceptor protein]-L-lysine = [E2 ubiquitin-conjugating enzyme]-L-cysteine + N(6)-ubiquitinyl-[acceptor protein]-L-lysine.. The protein operates within protein modification; protein ubiquitination. E3 ubiquitin-protein ligase that plays an essential role in stimulus-induced inositol 1,4,5-trisphosphate receptor (ITPR) ubiquitination and degradation via the endoplasmic reticulum-associated degradation (ERAD) pathway. Also involved in ITPR turnover in resting cells. In Xenopus tropicalis (Western clawed frog), this protein is E3 ubiquitin-protein ligase RNF170 (rnf170).